The primary structure comprises 421 residues: Accessory Sec system protein translocase subunit SecY2 (421 aa).

The next 10 helical transmembrane spans lie at 17–37 (LWTS…IPGV), 69–89 (FALG…LTLI), 102–122 (TFLF…IAII), 139–159 (FGAM…LVWL), 165–185 (ILGI…NWPT), 204–224 (VILM…TVVV), 254–274 (PAGG…QYIL), 299–319 (PLGV…FAFI), 358–378 (SFVG…FGII), and 383–403 (TQYA…INII).

It belongs to the SecY/SEC61-alpha family. SecY2 subfamily. Component of the accessory SecA2/SecY2 protein translocase complex required to export cell wall proteins. May form heterotrimers with SecE and SecG subunits.

It localises to the cell membrane. Functionally, part of the accessory SecA2/SecY2 system specifically required for export of possible cell wall proteins. The central subunit of a protein translocation channel. The polypeptide is Accessory Sec system protein translocase subunit SecY2 (Leuconostoc gelidum subsp. gasicomitatum (strain DSM 15947 / CCUG 46042 / CECT 5767 / JCM 12535 / LMG 18811 / NBRC 113245 / TB1-10) (Leuconostoc gasicomitatum)).